An 842-amino-acid chain; its full sequence is Leucine--tRNA ligase (842 aa).

The 'HIGH' region motif lies at 44–55 (PYPSANGLHVGH). A 'KMSKS' region motif is present at residues 619-623 (KMSKS). Position 622 (lysine 622) interacts with ATP.

The protein belongs to the class-I aminoacyl-tRNA synthetase family.

The protein resides in the cytoplasm. It catalyses the reaction tRNA(Leu) + L-leucine + ATP = L-leucyl-tRNA(Leu) + AMP + diphosphate. This is Leucine--tRNA ligase from Borrelia turicatae (strain 91E135).